Here is a 495-residue protein sequence, read N- to C-terminus: Glutamate--tRNA ligase (495 aa).

The 'HIGH' region motif lies at 13 to 23 (PSPTGTPHVGL). The 'KMSKS' region signature appears at 257–261 (KLSKR). ATP is bound at residue K260.

Belongs to the class-I aminoacyl-tRNA synthetase family. Glutamate--tRNA ligase type 1 subfamily. In terms of assembly, monomer.

The protein localises to the cytoplasm. It carries out the reaction tRNA(Glu) + L-glutamate + ATP = L-glutamyl-tRNA(Glu) + AMP + diphosphate. In terms of biological role, catalyzes the attachment of glutamate to tRNA(Glu) in a two-step reaction: glutamate is first activated by ATP to form Glu-AMP and then transferred to the acceptor end of tRNA(Glu). The protein is Glutamate--tRNA ligase of Mycolicibacterium vanbaalenii (strain DSM 7251 / JCM 13017 / BCRC 16820 / KCTC 9966 / NRRL B-24157 / PYR-1) (Mycobacterium vanbaalenii).